A 66-amino-acid chain; its full sequence is DNA gyrase inhibitor YacG (66 aa).

Zn(2+)-binding residues include Cys9, Cys12, Cys28, and Cys32.

This sequence belongs to the DNA gyrase inhibitor YacG family. In terms of assembly, interacts with GyrB. The cofactor is Zn(2+).

In terms of biological role, inhibits all the catalytic activities of DNA gyrase by preventing its interaction with DNA. Acts by binding directly to the C-terminal domain of GyrB, which probably disrupts DNA binding by the gyrase. The chain is DNA gyrase inhibitor YacG from Pseudomonas fluorescens (strain Pf0-1).